A 520-amino-acid chain; its full sequence is Acetylcholine receptor subunit delta (520 aa).

An N-terminal signal peptide occupies residues 1–24; it reads MAGPVLTLGLLAALVVCALPGSWG. Topologically, residues 25–248 are extracellular; sequence LNEEQRLIQH…VTFYLIIRRK (224 aa). Asn100, Asn167, and Asn193 each carry an N-linked (GlcNAc...) asparagine glycan. A disulfide bridge links Cys154 with Cys168. Transmembrane regions (helical) follow at residues 249-273, 281-299, and 315-336; these read PLFYIINILVPCVLISFMINLVFYL, TSVAISVLLAQSVFLLLIS, and FLLFGMVLVTMVVVICVIVLNI. Over 337-474 the chain is Cytoplasmic; the sequence is HFRTPSTHVL…WNQVARTVDR (138 aa). Residue Tyr393 is modified to Phosphotyrosine; by Tyr-kinases. Residues 475–493 form a helical membrane-spanning segment; it reads LCLFVVTPVMVVGTAWIFL.

Belongs to the ligand-gated ion channel (TC 1.A.9) family. Acetylcholine receptor (TC 1.A.9.1) subfamily. Delta/CHRND sub-subfamily. As to quaternary structure, pentamer of two alpha chains, and one each of the beta, delta, and gamma (in immature muscle) or epsilon (in mature muscle) chains. The muscle heteropentamer composed of alpha-1, beta-1, delta, epsilon subunits interacts with the alpha-conotoxin ImII.

The protein localises to the postsynaptic cell membrane. Its subcellular location is the cell membrane. It catalyses the reaction K(+)(in) = K(+)(out). The catalysed reaction is Na(+)(in) = Na(+)(out). After binding acetylcholine, the AChR responds by an extensive change in conformation that affects all subunits and leads to opening of an ion-conducting channel across the plasma membrane. The protein is Acetylcholine receptor subunit delta (Chrnd) of Mus musculus (Mouse).